A 185-amino-acid polypeptide reads, in one-letter code: Large ribosomal subunit protein bL17 (185 aa).

This sequence belongs to the bacterial ribosomal protein bL17 family. In terms of assembly, part of the 50S ribosomal subunit. Contacts protein L32.

The chain is Large ribosomal subunit protein bL17 from Rhodococcus erythropolis (strain PR4 / NBRC 100887).